A 681-amino-acid polypeptide reads, in one-letter code: Peroxisomal acyl-coenzyme A oxidase 2 (681 aa).

The residue at position 9 (serine 9) is a Phosphoserine. N6-succinyllysine occurs at positions 66, 137, 453, 561, and 667. Positions 679–681 (SNL) match the Microbody targeting signal motif.

This sequence belongs to the acyl-CoA oxidase family. In terms of assembly, homodimer. FAD serves as cofactor. Liver and kidney.

It localises to the peroxisome. The catalysed reaction is (25R)-3alpha,7alpha,12alpha-trihydroxy-5beta-cholestan-26-oyl-CoA + A + H2O = (24R,25R)-3alpha,7alpha,12alpha,24-tetrahydroxy-5beta-cholestan-26-oyl-CoA + AH2. It carries out the reaction (25S)-3alpha,7alpha,12alpha-trihydroxy-5beta-cholestan-26-oyl-CoA + O2 = (24E)-3alpha,7alpha,12alpha-trihydroxy-5beta-cholest-24-en-26-oyl-CoA + H2O2. In terms of biological role, oxidizes the CoA esters of the bile acid intermediates di- and tri-hydroxycholestanoic acids. Capable of oxidizing short as well as long chain 2-methyl branched fatty acids. The chain is Peroxisomal acyl-coenzyme A oxidase 2 from Oryctolagus cuniculus (Rabbit).